A 1089-amino-acid polypeptide reads, in one-letter code: Translocase of chloroplast 120, chloroplastic (1089 aa).

Residue glycine 2 is modified to N-acetylglycine. Disordered stretches follow at residues 158 to 179 (ATED…GVVS), 255 to 339 (TLSP…GLGR), and 353 to 381 (QPRV…EHDE). The span at 165 to 176 (ENGNTHSSSENG) shows a compositional bias: polar residues. Residues serine 179, serine 263, and serine 283 each carry the phosphoserine modification. A compositionally biased stretch (basic and acidic residues) spans 300–312 (EIKESQHMERESE). Residues 327–339 (AALPPARPAGLGR) show a composition bias toward low complexity. Positions 353-374 (QPRVNGNVSHNQPQQAEDSTTA) are enriched in polar residues. Positions 454–683 (DFSCTIMVLG…KLQDNIPGGQ (230 aa)) constitute an AIG1-type G domain. Residues 463-470 (GKSGVGKS) are G1. GTP contacts are provided by residues 466 to 471 (GVGKSA) and 485 to 490 (DAFQVG). Position 470 (serine 470) interacts with Mg(2+). A homodimerization region spans residues 485-488 (DAFQ). Positions 489-493 (VGTKK) are G2. A G3 region spans residues 510–513 (DTPG). The segment at 548–553 (RLDMQS) is homodimerization. The G4 stretch occupies residues 582–585 (THAA). Residues histidine 583 and 631–632 (EN) contribute to the GTP site. A G5 region spans residues 631 to 633 (ENH). Positions 710 to 748 (PEQQYDDEDDEDDLDESSDSEEESEYDELPPFKRLTKAE) are disordered. The segment covering 713-737 (QYDDEDDEDDLDESSDSEEESEYDE) has biased composition (acidic residues). The stretch at 767–788 (REKLFMKRQMKEERKRRKLLKK) forms a coiled coil. The chain crosses the membrane as a helical span at residues 1064 to 1080 (LAVVALVPLFKKLLTYY).

The protein belongs to the TRAFAC class TrmE-Era-EngA-EngB-Septin-like GTPase superfamily. AIG1/Toc34/Toc159-like paraseptin GTPase family. TOC159 subfamily. In terms of assembly, homodimer. Part of the TOC core complex that includes 1 protein for the specific recognition of transit peptides surrounded by a ring composed of four proteins forming translocation channels, and four to five GTP-binding proteins providing energy. This core complex can interact with components of the TIC complex to form a larger import complex. Chloroplastic protein precursor such as prSS (precursor of the RuBisCO small subunit) interacts with these complexes. The TOC complex contains a specific subset of polar lipids such as digalactosyldiacylglyceride (DGDG), phosphatidylcholine (PC) and phosphatidylglycerol (PG). It depends on Mg(2+) as a cofactor. In terms of processing, phosphorylated by KOC1. Expressed in seedlings, flowers, and roots.

It is found in the plastid. The protein resides in the chloroplast outer membrane. It localises to the cytoplasm. Its function is as follows. GTPase involved in protein precursor import into chloroplasts. Seems to recognize chloroplast-destined precursor proteins and regulate their presentation to the translocation channel through GTP hydrolysis. Probably specialized in the import of nuclear encoded non-photosynthetic preproteins from the cytoplasm to the chloroplast. The protein is Translocase of chloroplast 120, chloroplastic of Arabidopsis thaliana (Mouse-ear cress).